The following is a 380-amino-acid chain: Putative glutamate--cysteine ligase 2 (380 aa).

Belongs to the glutamate--cysteine ligase type 2 family. YbdK subfamily.

It carries out the reaction L-cysteine + L-glutamate + ATP = gamma-L-glutamyl-L-cysteine + ADP + phosphate + H(+). ATP-dependent carboxylate-amine ligase which exhibits weak glutamate--cysteine ligase activity. The sequence is that of Putative glutamate--cysteine ligase 2 from Pseudomonas entomophila (strain L48).